Reading from the N-terminus, the 209-residue chain is V-type ATP synthase subunit D (209 aa).

Belongs to the V-ATPase D subunit family.

Its function is as follows. Produces ATP from ADP in the presence of a proton gradient across the membrane. This is V-type ATP synthase subunit D from Anaeromyxobacter dehalogenans (strain 2CP-1 / ATCC BAA-258).